Here is a 751-residue protein sequence, read N- to C-terminus: Protein WEAK CHLOROPLAST MOVEMENT UNDER BLUE LIGHT-like 3 (751 aa).

Phosphoserine is present on serine 113. 2 coiled-coil regions span residues 165–558 (ERRK…ALQE) and 588–647 (QALE…KARD). Basic and acidic residues-rich tracts occupy residues 455–467 (RERQDLEETKQKE) and 625–689 (NREM…RNKE). Disordered regions lie at residues 455 to 479 (RERQDLEETKQKESTGLARTNDKDA) and 625 to 751 (NREM…HSHK). A compositionally biased stretch (low complexity) spans 704–723 (GSSSNNTGGSTTTNNNNLTP).

Belongs to the WEB family.

The polypeptide is Protein WEAK CHLOROPLAST MOVEMENT UNDER BLUE LIGHT-like 3 (WEL3) (Arabidopsis thaliana (Mouse-ear cress)).